Here is a 611-residue protein sequence, read N- to C-terminus: UvrABC system protein C (611 aa).

The region spanning 6–84 (NNPGVYRMFN…IKRSRPRFNV (79 aa)) is the GIY-YIG domain. One can recognise a UVR domain in the interval 194-229 (QSVKDHLAAAMQAASADLDFEHAAVYRDRLAALSHV).

The protein belongs to the UvrC family. In terms of assembly, interacts with UvrB in an incision complex.

It localises to the cytoplasm. Its function is as follows. The UvrABC repair system catalyzes the recognition and processing of DNA lesions. UvrC both incises the 5' and 3' sides of the lesion. The N-terminal half is responsible for the 3' incision and the C-terminal half is responsible for the 5' incision. The polypeptide is UvrABC system protein C (Brucella suis biovar 1 (strain 1330)).